The following is a 242-amino-acid chain: Venom nerve growth factor 1 (242 aa).

The N-terminal stretch at 1–18 (MSMLCYTLIIAFLIGIWA) is a signal peptide. The propeptide occupies 19-125 (APKSEDNVPL…ALNRNIRSKR (107 aa)). Positions 26-69 (VPLGSPATSDLSDTSCAQTHKALKTSRNTDQRHPAPKKAEDQEL) are disordered. A compositionally biased stretch (polar residues) spans 31 to 43 (PATSDLSDTSCAQ). Residues 52 to 66 (RNTDQRHPAPKKAED) show a composition bias toward basic and acidic residues. Intrachain disulfides connect C139–C203, C181–C231, and C191–C233. The N-linked (GlcNAc...) asparagine glycan is linked to N147.

It belongs to the NGF-beta family. As to quaternary structure, homodimer; non-covalently linked. As to expression, expressed by the venom gland.

The protein localises to the secreted. In terms of biological role, nerve growth factor is important for the development and maintenance of the sympathetic and sensory nervous systems. It stimulates division and differentiation of sympathetic and embryonic sensory neurons as well as basal forebrain cholinergic neurons in the brain. Its relevance in the snake venom is not clear. However, it has been shown to inhibit metalloproteinase-dependent proteolysis of platelet glycoprotein Ib alpha, suggesting a metalloproteinase inhibition to prevent metalloprotease autodigestion and/or protection against prey proteases. Binds a lipid between the two protein chains in the homodimer. The lipid-bound form promotes histamine relase from mouse mast cells, contrary to the lipid-free form. This Demansia vestigiata (Lesser black whip snake) protein is Venom nerve growth factor 1.